Consider the following 397-residue polypeptide: 3-ketoacyl-CoA thiolase, mitochondrial (397 aa).

The transit peptide at 1–16 (MALLRGVFVVAAKRTP) directs the protein to the mitochondrion; not cleaved. K25 bears the N6-acetyllysine; alternate mark. N6-succinyllysine; alternate is present on K25. K45 bears the N6-succinyllysine mark. C92 acts as the Acyl-thioester intermediate in catalysis. T119 carries the post-translational modification Phosphothreonine. S121 is modified (phosphoserine). Y127 bears the Phosphotyrosine mark. A Phosphothreonine modification is found at T136. K137 carries the N6-acetyllysine; alternate modification. K137 carries the N6-succinyllysine; alternate modification. At S140 the chain carries Phosphoserine. N6-acetyllysine; alternate is present on residues K143, K171, K191, and K209. 4 positions are modified to N6-succinyllysine; alternate: K143, K171, K191, and K209. 3 positions are modified to N6-succinyllysine: K211, K212, and K214. R224 and T227 together coordinate CoA. K234 is subject to N6-acetyllysine; alternate. K234 carries the post-translational modification N6-succinyllysine; alternate. N6-succinyllysine is present on K240. N6-acetyllysine is present on K241. S251 contributes to the CoA binding site. 2 positions are modified to N6-acetyllysine: K269 and K270. N6-acetyllysine; alternate is present on K305. K305 carries the post-translational modification N6-succinyllysine; alternate. At S310 the chain carries Phosphoserine. K312 is subject to N6-acetyllysine; alternate. Residue K312 is modified to N6-succinyllysine; alternate. S333 is modified (phosphoserine). 2 positions are modified to N6-acetyllysine: K340 and K375. Catalysis depends on C382, which acts as the Proton donor/acceptor.

It belongs to the thiolase-like superfamily. Thiolase family. As to quaternary structure, homotetramer. Interacts with BNIP3.

It is found in the mitochondrion. The catalysed reaction is an acyl-CoA + acetyl-CoA = a 3-oxoacyl-CoA + CoA. It catalyses the reaction 2 acetyl-CoA = acetoacetyl-CoA + CoA. It carries out the reaction acetyl-CoA + H2O = acetate + CoA + H(+). The enzyme catalyses propanoyl-CoA + H2O = propanoate + CoA + H(+). The catalysed reaction is butanoyl-CoA + H2O = butanoate + CoA + H(+). It catalyses the reaction hexanoyl-CoA + H2O = hexanoate + CoA + H(+). It carries out the reaction octanoyl-CoA + H2O = octanoate + CoA + H(+). The enzyme catalyses decanoyl-CoA + H2O = decanoate + CoA + H(+). The catalysed reaction is dodecanoyl-CoA + H2O = dodecanoate + CoA + H(+). It catalyses the reaction tetradecanoyl-CoA + H2O = tetradecanoate + CoA + H(+). It carries out the reaction hexadecanoyl-CoA + H2O = hexadecanoate + CoA + H(+). It functions in the pathway lipid metabolism; fatty acid beta-oxidation. Its function is as follows. In the production of energy from fats, this is one of the enzymes that catalyzes the last step of the mitochondrial beta-oxidation pathway, an aerobic process breaking down fatty acids into acetyl-CoA. Using free coenzyme A/CoA, catalyzes the thiolytic cleavage of medium- to long-chain unbranched 3-oxoacyl-CoAs into acetyl-CoA and a fatty acyl-CoA shortened by two carbon atoms. Also catalyzes the condensation of two acetyl-CoA molecules into acetoacetyl-CoA and could be involved in the production of ketone bodies. Also displays hydrolase activity on various fatty acyl-CoAs. Thereby, could be responsible for the production of acetate in a side reaction to beta-oxidation. Abolishes BNIP3-mediated apoptosis and mitochondrial damage. In Homo sapiens (Human), this protein is 3-ketoacyl-CoA thiolase, mitochondrial (ACAA2).